The following is a 367-amino-acid chain: UDP-N-acetylglucosamine--N-acetylmuramyl-(pentapeptide) pyrophosphoryl-undecaprenol N-acetylglucosamine transferase (367 aa).

Residues Thr-15–Gly-17, Asn-126, Arg-169, Ser-197, and Gln-298 contribute to the UDP-N-acetyl-alpha-D-glucosamine site.

Belongs to the glycosyltransferase 28 family. MurG subfamily.

The protein localises to the cell inner membrane. The enzyme catalyses di-trans,octa-cis-undecaprenyl diphospho-N-acetyl-alpha-D-muramoyl-L-alanyl-D-glutamyl-meso-2,6-diaminopimeloyl-D-alanyl-D-alanine + UDP-N-acetyl-alpha-D-glucosamine = di-trans,octa-cis-undecaprenyl diphospho-[N-acetyl-alpha-D-glucosaminyl-(1-&gt;4)]-N-acetyl-alpha-D-muramoyl-L-alanyl-D-glutamyl-meso-2,6-diaminopimeloyl-D-alanyl-D-alanine + UDP + H(+). Its pathway is cell wall biogenesis; peptidoglycan biosynthesis. Cell wall formation. Catalyzes the transfer of a GlcNAc subunit on undecaprenyl-pyrophosphoryl-MurNAc-pentapeptide (lipid intermediate I) to form undecaprenyl-pyrophosphoryl-MurNAc-(pentapeptide)GlcNAc (lipid intermediate II). The protein is UDP-N-acetylglucosamine--N-acetylmuramyl-(pentapeptide) pyrophosphoryl-undecaprenol N-acetylglucosamine transferase of Bradyrhizobium sp. (strain BTAi1 / ATCC BAA-1182).